The primary structure comprises 99 residues: MKSAKLGFLLRFFIFCSLNTLLLGGVNKIAEKICGDLKDPCKLDMNFGSCYEVHFRYFYNRTSKRCETFVFSGCNGNLNNFKLKIEREVACVAKYKPPR.

Residues 1–24 (MKSAKLGFLLRFFIFCSLNTLLLG) form the signal peptide. Residues 41–91 (CKLDMNFGSCYEVHFRYFYNRTSKRCETFVFSGCNGNLNNFKLKIEREVAC) enclose the BPTI/Kunitz inhibitor domain. 2 disulfide bridges follow: cysteine 41/cysteine 91 and cysteine 50/cysteine 74.

The protein localises to the secreted. The chain is Kunitz-type protease inhibitor 4 (SPINT4) from Homo sapiens (Human).